Reading from the N-terminus, the 251-residue chain is Large ribosomal subunit protein uL4 (251 aa).

Belongs to the universal ribosomal protein uL4 family. As to quaternary structure, part of the 50S ribosomal subunit.

Functionally, one of the primary rRNA binding proteins, this protein initially binds near the 5'-end of the 23S rRNA. It is important during the early stages of 50S assembly. It makes multiple contacts with different domains of the 23S rRNA in the assembled 50S subunit and ribosome. In terms of biological role, forms part of the polypeptide exit tunnel. The chain is Large ribosomal subunit protein uL4 from Methanothrix thermoacetophila (strain DSM 6194 / JCM 14653 / NBRC 101360 / PT) (Methanosaeta thermophila).